We begin with the raw amino-acid sequence, 615 residues long: DNA mismatch repair protein MutL (615 aa).

The interval 363-397 is disordered; sequence FAEPAAREPVAPRYTPAPASGSRPAAPWPNAQPGY. A compositionally biased stretch (low complexity) spans 364–391; sequence AEPAAREPVAPRYTPAPASGSRPAAPWP.

It belongs to the DNA mismatch repair MutL/HexB family.

Functionally, this protein is involved in the repair of mismatches in DNA. It is required for dam-dependent methyl-directed DNA mismatch repair. May act as a 'molecular matchmaker', a protein that promotes the formation of a stable complex between two or more DNA-binding proteins in an ATP-dependent manner without itself being part of a final effector complex. This chain is DNA mismatch repair protein MutL, found in Escherichia coli (strain K12 / MC4100 / BW2952).